A 348-amino-acid chain; its full sequence is tRNA N6-adenosine threonylcarbamoyltransferase (348 aa).

Residues histidine 111 and histidine 115 each contribute to the Fe cation site. Substrate-binding positions include leucine 134–glycine 138, aspartate 167, glycine 180, and asparagine 277. Aspartate 305 serves as a coordination point for Fe cation.

Belongs to the KAE1 / TsaD family. The cofactor is Fe(2+).

The protein resides in the cytoplasm. The catalysed reaction is L-threonylcarbamoyladenylate + adenosine(37) in tRNA = N(6)-L-threonylcarbamoyladenosine(37) in tRNA + AMP + H(+). In terms of biological role, required for the formation of a threonylcarbamoyl group on adenosine at position 37 (t(6)A37) in tRNAs that read codons beginning with adenine. Is involved in the transfer of the threonylcarbamoyl moiety of threonylcarbamoyl-AMP (TC-AMP) to the N6 group of A37, together with TsaE and TsaB. TsaD likely plays a direct catalytic role in this reaction. In Haemophilus ducreyi (strain 35000HP / ATCC 700724), this protein is tRNA N6-adenosine threonylcarbamoyltransferase.